The following is a 539-amino-acid chain: MHDKILILDFGSQVTQLIARRVREAHVYCEIHPNDVSDDFVREFAPKAIILSGSHASTYEDHQLRAPQAVWDLGVPVLGICYGMQTMAVQLGGKVEWSDHREFGYAEVRAHGHTNLLKDIEDFRTPEGHGMLKVWMSHGDKVAGLPPGFKLMASTPSCPIAGMADEARGYYAVQFHPEVTHTAKGRQMLERFVLGIAGCKPDWVMRDHIEEAVAKIREQVGDEEVILGLSGGVDSSVAAALIHRAIGDQLTCVFVDHGLLRQDEGKLVMEMFVGRLHAKVVHIDASEQFLGHLAGVTDPEQKRKIIGREFVEVFQAEARKLSNAKWLAQGTIYPDVVESGGTKTKKATTIKSHHNVGGLPETLGLKLLEPLRDLFKDEVRELGVALGLPPEMVYRHPFPGPGLGVRILGEVKRDYADLLRRADAIFIEELRKTLATEQDAAAGLCEPDQVGKSWYDLTSQAFAVFLPVKSVGVMGDGRTYDYVVALRAVQTTDFMTAHWAHLPYALLGRCSNRIINEVRGLNRVVYDVSGKPPATIEWE.

The 199-residue stretch at 4–202 folds into the Glutamine amidotransferase type-1 domain; sequence KILILDFGSQ…VLGIAGCKPD (199 aa). Cysteine 81 acts as the Nucleophile in catalysis. Catalysis depends on residues histidine 176 and glutamate 178. The GMPS ATP-PPase domain occupies 203 to 395; sequence WVMRDHIEEA…LGLPPEMVYR (193 aa). ATP is bound at residue 230–236; it reads SGGVDSS.

Homodimer.

It carries out the reaction XMP + L-glutamine + ATP + H2O = GMP + L-glutamate + AMP + diphosphate + 2 H(+). Its pathway is purine metabolism; GMP biosynthesis; GMP from XMP (L-Gln route): step 1/1. Functionally, catalyzes the synthesis of GMP from XMP. The protein is GMP synthase [glutamine-hydrolyzing] of Cupriavidus necator (strain ATCC 17699 / DSM 428 / KCTC 22496 / NCIMB 10442 / H16 / Stanier 337) (Ralstonia eutropha).